The sequence spans 495 residues: Cysteine--tRNA ligase (495 aa).

Residue Cys-29 coordinates Zn(2+). Positions 31–41 (PTVYDYGHIGN) match the 'HIGH' region motif. Positions 211, 236, and 240 each coordinate Zn(2+). A 'KMSKS' region motif is present at residues 268-272 (KMSKS). ATP is bound at residue Lys-271.

This sequence belongs to the class-I aminoacyl-tRNA synthetase family. As to quaternary structure, monomer. Zn(2+) serves as cofactor.

It is found in the cytoplasm. It carries out the reaction tRNA(Cys) + L-cysteine + ATP = L-cysteinyl-tRNA(Cys) + AMP + diphosphate. The protein is Cysteine--tRNA ligase of Koribacter versatilis (strain Ellin345).